A 1315-amino-acid polypeptide reads, in one-letter code: Tetratricopeptide repeat protein 21B (1315 aa).

TPR repeat units follow at residues 108 to 141, 145 to 178, 192 to 225, 285 to 323, 324 to 357, 492 to 525, 563 to 596, 616 to 649, 721 to 754, 756 to 788, 790 to 821, 830 to 863, 883 to 916, 918 to 950, 951 to 984, 1022 to 1055, 1196 to 1229, 1231 to 1263, and 1265 to 1298; these read RKAL…PHDS, PILK…GNDI, QNYS…QLAL, AQLF…TPQQ, AEIA…NESN, PQAV…SPSY, PLYH…PGMR, LSIF…FSGT, PRSF…NPKD, TLAR…GQQN, LCYD…EPVS, GRSQ…QARI, AEIC…CETD, KIML…DQDN, EPAT…KPDN, PGFQ…SDWG, EKSW…NRSC, KAYE…SNQT, and PAVG…HPTY.

The protein belongs to the TTC21 family. Component of the IFT complex A (IFT-A) complex. IFT-A complex is divided into a core subcomplex composed of IFT122:IFT140:WDR19 which is associated with TULP3 and a peripheral subcomplex composed of IFT43:WDR35:TTC21B. Interacts directy with WDR35 and TTC21B. Interacts with TTC25.

The protein resides in the cytoplasm. It localises to the cytoskeleton. The protein localises to the cilium axoneme. Its function is as follows. Component of the IFT complex A (IFT-A), a complex required for retrograde ciliary transport and entry into cilia of G protein-coupled receptors (GPCRs). Essential for retrograde trafficking of IFT-1, IFT-B and GPCRs. Negatively modulates the SHH signal transduction. In Mus musculus (Mouse), this protein is Tetratricopeptide repeat protein 21B (Ttc21b).